A 118-amino-acid chain; its full sequence is Putative membrane protein insertion efficiency factor (118 aa).

It belongs to the UPF0161 family.

It is found in the cell inner membrane. Could be involved in insertion of integral membrane proteins into the membrane. The polypeptide is Putative membrane protein insertion efficiency factor (Helicobacter pylori (strain P12)).